Reading from the N-terminus, the 717-residue chain is Glutamate--cysteine ligase (717 aa).

The interval 484–576 (SKTTEQRAAK…TDSDHTDTDD (93 aa)) is disordered. Composition is skewed to low complexity over residues 492–518 (AKAQAQAQAQAKAQAQTNGKATLNGNG) and 551–567 (GTTNGTNGSSNGSSNGT).

Belongs to the glutamate--cysteine ligase type 3 family.

The catalysed reaction is L-cysteine + L-glutamate + ATP = gamma-L-glutamyl-L-cysteine + ADP + phosphate + H(+). It carries out the reaction (2S)-2-aminobutanoate + L-glutamate + ATP = gamma-L-glutamyl-(2S)-2-aminobutanoate + ADP + phosphate + H(+). The protein operates within sulfur metabolism; glutathione biosynthesis; glutathione from L-cysteine and L-glutamate: step 1/2. In terms of biological role, catalyzes the ATP-dependent ligation of L-glutamate and L-cysteine and participates in the first and rate-limiting step in glutathione biosynthesis. The chain is Glutamate--cysteine ligase from Drosophila melanogaster (Fruit fly).